Consider the following 312-residue polypeptide: Pseudouridine-5'-phosphate glycosidase (312 aa).

Residue E31 is the Proton donor of the active site. Substrate contacts are provided by K93 and V113. Position 145 (D145) interacts with Mn(2+). Residue 147-149 (SAD) coordinates substrate. The active-site Nucleophile is K166.

This sequence belongs to the pseudouridine-5'-phosphate glycosidase family. In terms of assembly, homotrimer. Mn(2+) serves as cofactor. Fe(2+) is required as a cofactor. Requires Co(2+) as cofactor.

The enzyme catalyses D-ribose 5-phosphate + uracil = psi-UMP + H2O. With respect to regulation, inhibited by Zn(2+) and Ni(2+). Functionally, catalyzes the reversible cleavage of pseudouridine 5'-phosphate (PsiMP) to ribose 5-phosphate and uracil. Functions biologically in the cleavage direction, as part of a pseudouridine degradation pathway. This chain is Pseudouridine-5'-phosphate glycosidase, found in Escherichia coli (strain K12).